Reading from the N-terminus, the 120-residue chain is uncharacterized protein (120 aa).

The next 2 membrane-spanning stretches (helical) occupy residues Pro26–Met46 and Leu57–Val77.

It localises to the membrane. This is an uncharacterized protein from Saccharomyces cerevisiae (strain ATCC 204508 / S288c) (Baker's yeast).